The sequence spans 31 residues: Photosystem II reaction center protein T (31 aa).

A helical transmembrane segment spans residues 3-23; that stretch reads SFAYVLILTFAIATLFFAIAF.

Belongs to the PsbT family. PSII is composed of 1 copy each of membrane proteins PsbA, PsbB, PsbC, PsbD, PsbE, PsbF, PsbH, PsbI, PsbJ, PsbK, PsbL, PsbM, PsbT, PsbX, PsbY, PsbZ, Psb30/Ycf12, peripheral proteins PsbO, CyanoQ (PsbQ), PsbU, PsbV and a large number of cofactors. It forms dimeric complexes.

The protein resides in the cellular thylakoid membrane. Functionally, found at the monomer-monomer interface of the photosystem II (PS II) dimer, plays a role in assembly and dimerization of PSII. PSII is a light-driven water plastoquinone oxidoreductase, using light energy to abstract electrons from H(2)O, generating a proton gradient subsequently used for ATP formation. The sequence is that of Photosystem II reaction center protein T from Synechococcus sp. (strain CC9902).